Consider the following 122-residue polypeptide: Large ribosomal subunit protein uL18 (122 aa).

Belongs to the universal ribosomal protein uL18 family. As to quaternary structure, part of the 50S ribosomal subunit; part of the 5S rRNA/L5/L18/L25 subcomplex. Contacts the 5S and 23S rRNAs.

Its function is as follows. This is one of the proteins that bind and probably mediate the attachment of the 5S RNA into the large ribosomal subunit, where it forms part of the central protuberance. The chain is Large ribosomal subunit protein uL18 from Mycobacterium tuberculosis (strain ATCC 25177 / H37Ra).